The chain runs to 484 residues: Monocarboxylate transporter 2 (484 aa).

Residues 1-16 (MPSETAVPPPHPIPPD) are Cytoplasmic-facing. Residues 17–37 (GGWGWVVVGAAFISIGFSYAF) form a helical membrane-spanning segment. Over 38 to 60 (PKAVTVFFKDIQQIFQASYSEIA) the chain is Extracellular. Residues 61–81 (WISSIMLAVMYAGGPISSVLV) form a helical membrane-spanning segment. Residues 82-87 (NNYGSR) lie on the Cytoplasmic side of the membrane. Residues 88–108 (PVVIIGGLLCCTGMILASFSN) traverse the membrane as a helical segment. Topologically, residues 109–116 (SVLELYLT) are extracellular. Residues 117-137 (IGFIGGLGLAFNLQPALTIIG) traverse the membrane as a helical segment. Over 138–144 (KYFYRRR) the chain is Cytoplasmic. The helical transmembrane segment at 145 to 165 (PMANGLAMAGSPVFLSSLAPF) threads the bilayer. Over 166-174 (NQYLFNSYG) the chain is Extracellular. The helical transmembrane segment at 175–195 (WKGSFLILGGIFLHSCVAGCL) threads the bilayer. The Cytoplasmic segment spans residues 196 to 245 (MRPVQTSPRKSKSKSKVGSRQDGSMKKASKVSTAEKINRFLDFSLFKHRG). The segment at 201–224 (TSPRKSKSKSKVGSRQDGSMKKAS) is disordered. A helical membrane pass occupies residues 246-266 (FLIYLSGNVIMFLGFFAPIIF). The Extracellular portion of the chain corresponds to 267 to 282 (LAPYAKDKGVDEYNAA). Residues 283–303 (LLLSVMAFVDMFARPTGGLIA) traverse the membrane as a helical segment. Residues 304–311 (NSKLIRPR) are Cytoplasmic-facing. The helical transmembrane segment at 312–332 (IQYFFSFAIVFTGICHLLCPL) threads the bilayer. The Extracellular segment spans residues 333-337 (ADTYP). Residues 338–358 (ALVVYSIFFGYGFGSVSSVLF) traverse the membrane as a helical segment. Residues 359–372 (ETLMDLVGPARFSS) lie on the Cytoplasmic side of the membrane. The helical transmembrane segment at 373-393 (AVGLATIVECCPVLLGPPLAG) threads the bilayer. Over 394–405 (KLVDKTKDYKYM) the chain is Extracellular. Residues 406–426 (YIASGTIVVISGIYLFIGNAI) traverse the membrane as a helical segment. Residues 427–484 (NYRLLAKERKREKARKKKSATHPSRESEALSRSKQDDVSVKVSNPHNSPSDRERESNI) are Cytoplasmic-facing. Residues 437-484 (REKARKKKSATHPSRESEALSRSKQDDVSVKVSNPHNSPSDRERESNI) are disordered. 2 stretches are compositionally biased toward basic and acidic residues: residues 449–465 (PSRE…DDVS) and 475–484 (PSDRERESNI).

It belongs to the major facilitator superfamily. Monocarboxylate porter (TC 2.A.1.13) family. In terms of assembly, homodimer. Interacts with GRID2IP. Interacts with EMB; interaction mediates SLC16A7 targeting to the plasma membrane. Interacts with isoform 2 of BSG. In terms of tissue distribution, abundant on the surface of hepatocytes. Present on parietal cells of the oxyntic gland of the stomach, on the basolateral surface of epithelial cells in the collecting ducts of the kidney, on sperm tails throughout the epididymis. Expressed in mitochondria-rich skeletal muscle fibers and cardiac myocytes (at protein level).

Its subcellular location is the cell membrane. It is found in the basolateral cell membrane. The protein resides in the cytoplasm. It catalyses the reaction pyruvate(out) + H(+)(out) = pyruvate(in) + H(+)(in). It carries out the reaction 3-methyl-2-oxobutanoate(out) + H(+)(out) = 3-methyl-2-oxobutanoate(in) + H(+)(in). The enzyme catalyses (S)-lactate(in) + H(+)(in) = (S)-lactate(out) + H(+)(out). The catalysed reaction is acetoacetate(out) + H(+)(out) = acetoacetate(in) + H(+)(in). It catalyses the reaction (R)-3-hydroxybutanoate(out) + H(+)(out) = (R)-3-hydroxybutanoate(in) + H(+)(in). It carries out the reaction 4-methyl-2-oxopentanoate(out) + H(+)(out) = 4-methyl-2-oxopentanoate(in) + H(+)(in). The enzyme catalyses (S)-3-hydroxybutanoate(out) + H(+)(out) = (S)-3-hydroxybutanoate(in) + H(+)(in). Transport activity exhibits steep dependence on substrate concentration. Substrate concentration sensitivity of SLC16A7 arises from the strong inter-subunit cooperativity of the SLC16A7 dimer during transport. Inhibited by AR-C155858. Functionally, proton-coupled monocarboxylate symporter. Catalyzes the rapid transport across the plasma membrane of monocarboxylates such as L-lactate, pyruvate and ketone bodies, acetoacetate, beta-hydroxybutyrate and acetate. Dimerization is functionally required and both subunits work cooperatively in transporting substrate. The chain is Monocarboxylate transporter 2 (SLC16A7) from Mesocricetus auratus (Golden hamster).